Here is a 1098-residue protein sequence, read N- to C-terminus: PIRESVRVSTDRDPDLEDEKREQLGESMQTELERLTWGVEVGTSEDINVDTVKRWGLQNNKYNAEHWIPPGGQRTAEDMGKLYQFWDEFIETYENEVMMNSGYREPLNKDKVFNTLLDHSNNKTNQTAEELKGIQTKIERMTMYFYEANVYESLGQLKNKFINIDEQTAKDYLLDKLEKPDDLDIVRAMGTYTLECIVVFVLSKQFNVFALDKASVQVATLVSELDSAAKIEYNRIIAEDRKRKKAKWGDKQINEDENILLQDKGVDTFNGDVHSELDRKKKSISKQTNRKRVRISKHKEPGIGEALFGWLASRKLIEVKKPVFLFDKKNKKPKNVIYPGYVDCLFDIKDLPFCSTLPMVYPPADWELWPTATAEVSDPYITNLTPLSSYRGGYLTSLQRESGDSPTLLSEKDYGVFDIHIDRERSQPVLSAVKKLQWQPYRINKLVYDFIQKHWSVLVSVGLLRPKNLALFKRKEALRLLSSLLFKHEELSTIYRYSELKSVLLKNIHASTFELYTMKIAEAYLDYKIYFPIFLDFRGRNYRHGPFHFHERDLVRSLIIFDESDDSAAHTINSDVGDRILHNFLISAAYHKSKFGVYREALEFIYNKIEDMQSKPTFFEKDIFVDTLCCRHPFQYISSCISLKTYADTKDLSVLRYTPVFQDASASAYQIMSYFLLDIDYGIHTNLLKKTNTDGRYIRDIYEFMWGCLIKYLIAEEKIELAIKLLTPNEKDQESVLAKIVSIFDRNVVKKMFMPMMYGKTDYTLKKDVEDLLKGKSDSEGINLISKHISTYWKVNFGKMKDLMDLINYVSWFGAGQDKPVVYSTPYWVTLQTYKWRKRVKMKIQYETTKNNEKEVKTTSAKMLIPLNDNDIRKSSTSTFANFIHQKDAFTAIQLVDFINKLENASSIPIYAVHDNFITMPEYASILPTLYRDSIFRMGHPLIIINKFLFDHILIPAIQNEHPQNKHLFSVEERSMLDRMMIDLQNPLIPDFGSVDITKARIKSIVIPKDLLLKCFSCLWMSKTKKISLVRWESCRDKIIKVYMRYTDDISSDEGVSRWLEYKNNLEFASDPVWSSDNTNGTQADSLDKGEDDYCIHY.

The segment covering 1–24 (PIRESVRVSTDRDPDLEDEKREQL) has biased composition (basic and acidic residues). The segment at 1 to 26 (PIRESVRVSTDRDPDLEDEKREQLGE) is disordered. Catalysis depends on residues aspartate 663, lysine 750, and aspartate 915.

This sequence belongs to the phage and mitochondrial RNA polymerase family.

It localises to the mitochondrion. It catalyses the reaction RNA(n) + a ribonucleoside 5'-triphosphate = RNA(n+1) + diphosphate. DNA-dependent RNA polymerase catalyzes the transcription of DNA into RNA using the four ribonucleoside triphosphates as substrates. This chain is Probable DNA-directed RNA polymerase, found in Zea mays (Maize).